We begin with the raw amino-acid sequence, 2663 residues long: Ankyrin repeat domain-containing protein 11 (2663 aa).

Disordered stretches follow at residues 1-90 (MPKG…KEPV) and 128-169 (SANS…ERGE). 2 stretches are compositionally biased toward basic and acidic residues: residues 21–54 (MVEK…VRER) and 69–90 (EQKD…KEPV). Residues 128 to 155 (SANSPVDTTPKHPSQSTVCQKGTPNSAS) are compositionally biased toward polar residues. Basic and acidic residues predominate over residues 156–169 (KTKDKVNKRNERGE). ANK repeat units lie at residues 167–196 (RGET…DVNV), 200–229 (AGWT…EVNT), 233–262 (DDDT…NPQQ), and 266–292 (KGET…YTSS). A Phosphoserine modification is found at S276. 3 disordered regions span residues 289–380 (YTSS…SNSF), 398–647 (APKK…GQCS), and 723–783 (DTNK…NDLK). Acidic residues predominate over residues 295-305 (SSTESSEEEDA). Residues 309–320 (APSSSVDGNNTD) show a composition bias toward polar residues. Basic and acidic residues predominate over residues 356-376 (DRVPPVDDKHLLKKDYRKETK). S408 bears the Phosphoserine mark. Phosphothreonine is present on T410. Residue S411 is modified to Phosphoserine. A compositionally biased stretch (basic and acidic residues) spans 438–451 (KTREPSNAKQQKEK). The span at 452–462 (NKVKKKRKKET) shows a compositional bias: basic residues. Over residues 463 to 477 (KGREVRFGKRSDKFC) the composition is skewed to basic and acidic residues. Over residues 481 to 493 (SESESSESGEDDR) the composition is skewed to acidic residues. Residues 513–531 (SLFSSLSASSTSSHGSSAA) show a composition bias toward low complexity. The segment covering 539–550 (TDQHTKHWRTDN) has biased composition (basic and acidic residues). The segment covering 551–562 (WKTISSPAWSEV) has biased composition (polar residues). A compositionally biased stretch (low complexity) spans 576–588 (ESDYSSEGSSVES). 2 stretches are compositionally biased toward basic residues: residues 591–602 (PVRKRQEHRKRA) and 629–641 (VKKH…HKNK). The residue at position 834 (S834) is a Phosphoserine. Composition is skewed to basic and acidic residues over residues 881-928 (VKED…EKHK), 935-1043 (SEKD…KSIL), 1059-1090 (KKDT…KEKA), and 1099-1112 (FSEK…KEKS). Disordered regions lie at residues 881 to 1043 (VKED…KSIL) and 1059 to 1393 (KKDT…GQYE). The residue at position 1079 (S1079) is a Phosphoserine. The residue at position 1120 (T1120) is a Phosphothreonine. At S1123 the chain carries Phosphoserine. 3 stretches are compositionally biased toward basic and acidic residues: residues 1142 to 1301 (DLPR…DKIS), 1330 to 1347 (GDDK…LKEK), and 1359 to 1393 (KSHD…GQYE). Phosphothreonine is present on T1419. 5 stretches are compositionally biased toward basic and acidic residues: residues 1424–1446 (STEK…KELK), 1466–1545 (REKW…KGDP), 1556–1574 (APSK…KLLG), 1587–1597 (LSQKDLEIEER), and 1605–1639 (MKQM…DIPA). The disordered stretch occupies residues 1424–1710 (STEKKDKNDS…TGVPTPTSVL (287 aa)). S1509 carries the post-translational modification Phosphoserine. Residue S1692 is modified to Phosphoserine. Polar residues predominate over residues 1698 to 1710 (SRPTGVPTPTSVL). S1792 carries the post-translational modification Phosphoserine. The interval 1814 to 1836 (SVPAASSYDSPMPPSMEDRAPLP) is disordered. Phosphoserine is present on S1847. Phosphotyrosine occurs at positions 1850 and 1851. 3 positions are modified to phosphoserine: S1852, S1859, and S1990. 2 disordered regions span residues 1988 to 2019 (PESP…PAPP) and 2131 to 2406 (LDLG…STQQ). 2 stretches are compositionally biased toward low complexity: residues 2310–2324 (IQPE…AEAP) and 2391–2406 (RSTQ…STQQ). The interval 2369 to 2663 (AKARGSEDDD…VNDDFVLLPA (295 aa)) is important for protein degradation.

In terms of assembly, interacts with the PAS region of the p160 coactivators. In terms of processing, subject to proteasomal degradation which is probably essential to regulate its activity.

The protein localises to the nucleus. Its function is as follows. Chromatin regulator which modulates histone acetylation and gene expression in neural precursor cells. May recruit histone deacetylases (HDACs) to the p160 coactivators/nuclear receptor complex to inhibit ligand-dependent transactivation. Has a role in proliferation and development of cortical neural precursors. May also regulate bone homeostasis. The sequence is that of Ankyrin repeat domain-containing protein 11 (ANKRD11) from Homo sapiens (Human).